Consider the following 509-residue polypeptide: MDIRAAEISAILKEQIKNFGQEAEVTEVGQVLAVGDGIARVYGLDNVQAGEMVEFESGVRGMALNLEQDNVGVVIFGSDREIKEGQTVKRTGAIVDVPVGKGLLGRVVDGLGNPIDGKGPIQSTERRRVDVKAPGIIPRKSVHEPMATGLKAIDALIPVGRGQRELIIGDRQTGKTAIALDTILNQKPAHSGTDENAKLYCVYVAIGQKRSTVAQFVKVLEDQGALEYSIVIAATASDAAPMQFIAPFAGCAMGEYFRDNGMHAVIVYDDLSKQAVAYRQMSLLLRRPPGREAYPGDVFYLHSRLLERAAKMGDAAGKGSLTALPVIETQANDVSAYIPTNVISITDGQIFLETDLFYQGVRPAVNVGLSVSRVGSSAQTKAMKKVAGKIKGELAQYREMAAFAQFGSDLDASTQRLLNRGARLTELLKQPQFSPLKMEEQVAVIYAGVNGYLDKLPVNKVREFEDQLLGTLRSKHQDWLDSVRDSKDLSDANANTLKGVVESIAKSFA.

An ATP-binding site is contributed by 169 to 176 (GDRQTGKT).

Belongs to the ATPase alpha/beta chains family. As to quaternary structure, F-type ATPases have 2 components, CF(1) - the catalytic core - and CF(0) - the membrane proton channel. CF(1) has five subunits: alpha(3), beta(3), gamma(1), delta(1), epsilon(1). CF(0) has three main subunits: a(1), b(2) and c(9-12). The alpha and beta chains form an alternating ring which encloses part of the gamma chain. CF(1) is attached to CF(0) by a central stalk formed by the gamma and epsilon chains, while a peripheral stalk is formed by the delta and b chains.

The protein localises to the cell inner membrane. It carries out the reaction ATP + H2O + 4 H(+)(in) = ADP + phosphate + 5 H(+)(out). Its function is as follows. Produces ATP from ADP in the presence of a proton gradient across the membrane. The alpha chain is a regulatory subunit. The polypeptide is ATP synthase subunit alpha (Methylorubrum populi (strain ATCC BAA-705 / NCIMB 13946 / BJ001) (Methylobacterium populi)).